The primary structure comprises 56 residues: Ribosome modulation factor (56 aa).

The protein belongs to the ribosome modulation factor family.

It is found in the cytoplasm. Functionally, during stationary phase, converts 70S ribosomes to an inactive dimeric form (100S ribosomes). This is Ribosome modulation factor from Proteus mirabilis (strain HI4320).